The primary structure comprises 176 residues: Nucleoside triphosphate/diphosphate phosphatase (176 aa).

R23 acts as the Proton donor in catalysis. N87, D103, D105, D107, D120, and E123 together coordinate Mg(2+).

This sequence belongs to the Ntdp family. Mg(2+) is required as a cofactor.

The catalysed reaction is a ribonucleoside 5'-triphosphate + H2O = a ribonucleoside 5'-diphosphate + phosphate + H(+). It carries out the reaction a ribonucleoside 5'-diphosphate + H2O = a ribonucleoside 5'-phosphate + phosphate + H(+). In terms of biological role, has nucleoside phosphatase activity towards nucleoside triphosphates and nucleoside diphosphates. The sequence is that of Nucleoside triphosphate/diphosphate phosphatase from Bacillus pumilus (strain SAFR-032).